An 89-amino-acid polypeptide reads, in one-letter code: Small ribosomal subunit protein bS20 (89 aa).

Belongs to the bacterial ribosomal protein bS20 family.

Functionally, binds directly to 16S ribosomal RNA. This is Small ribosomal subunit protein bS20 from Wolbachia pipientis subsp. Culex pipiens (strain wPip).